The following is a 517-amino-acid chain: Cytochrome P450 monooxygenase sdnE (517 aa).

A helical transmembrane segment spans residues 4–24 (SSILQTLAVLYVLYLLGLIIY). N-linked (GlcNAc...) asparagine glycosylation is present at Asn111. The chain crosses the membrane as a helical span at residues 219-239 (FPVVFIILGLSPRAMLKLVVP). Cys456 lines the heme pocket.

This sequence belongs to the cytochrome P450 family. Requires heme as cofactor.

The protein localises to the membrane. It functions in the pathway antibiotic biosynthesis. In terms of biological role, cytochrome P450 monooxygenase; part of the gene cluster that mediates the biosynthesis of sordarin and hypoxysordarin, glycoside antibiotics with a unique tetracyclic diterpene aglycone structure. First, the geranylgeranyl diphosphate synthase sdnC constructs GGDP from farnesyl diphosphate and isopentenyl diphosphate. The diterpene cyclase sdnA then catalyzes the cyclization of GGDP to afford cycloaraneosene. Cycloaraneosene is then hydroxylated four times by the putative cytochrome P450 monooxygenases sdnB, sdnE, sdnF and sdnH to give a hydroxylated cycloaraneosene derivative such as cycloaraneosene-8,9,13,19-tetraol. Although the order of the hydroxylations is unclear, at least C8, C9 and C13 of the cycloaraneosene skeleton are hydroxylated before the sordaricin formation. Dehydration of the 13-hydroxy group of the hydroxylated cycloaraneosene derivative might be catalyzed by an unassigned hypothetical protein such as sdnG and sdnP to construct the cyclopentadiene moiety. The FAD-dependent oxidoreductase sdnN is proposed to catalyze the oxidation at C9 of the hydroxylated cycloaraneosene derivative and also catalyze the Baeyer-Villiger oxidation to give the lactone intermediate. The presumed lactone intermediate would be hydrolyzed to give an acrolein moiety and a carboxylate moiety. Then, [4+2]cycloaddition would occur between the acrolein moiety and the cyclopentadiene moiety to give sordaricin. SdnN might also be involved in the [4+2]cycloaddition after the hypothesized oxidation to accommodate the oxidized product and prompt the [4+2]cycloaddition. GDP-6-deoxy-D-altrose may be biosynthesized from GDP-D-mannose by the putative GDP-mannose-4,6-dehydratase sdnI and the short-chain dehydrogenase sdnK. The glycosyltransferase sdnJ catalyzes the attachment of 6-deoxy-D-altrose onto the 19-hydroxy group of sordaricin to give 4'-O-demethylsordarin. The methyltransferase sdnD would complete the biosynthesis of sordarin. Sordarin can be further modified into hypoxysordarin. The unique acyl chain at the 3'-hydroxy group of hypoxysordarin would be constructed by an iterative type I PKS sdnO and the trans-acting polyketide methyltransferase sdnL. SdnL would be responsible for the introduction of an alpha-methyl group of the polyketide chain. Alternatively, the beta-lactamase-like protein sdnR might be responsible for the cleavage and transfer of the polyketide chain from the PKS sdnO to sordarin. Two putative cytochrome P450 monooxygenases, sdnQ and sdnT, might catalyze the epoxidations of the polyketide chain to complete the biosynthesis of hypoxysordarin. Transcriptional regulators sdnM and sdnS are presumably encoded for the transcriptional regulation of the expression of the sdn gene cluster. The sequence is that of Cytochrome P450 monooxygenase sdnE from Sordaria araneosa (Pleurage araneosa).